The sequence spans 269 residues: 4-hydroxy-tetrahydrodipicolinate reductase (269 aa).

11-16 (GPIGRM) contributes to the NAD(+) binding site. K39 provides a ligand contact to NADP(+). NAD(+) contacts are provided by residues 101 to 103 (GTT) and 125 to 128 (ASNF). The active-site Proton donor/acceptor is H158. H159 serves as a coordination point for (S)-2,3,4,5-tetrahydrodipicolinate. The Proton donor role is filled by K162. 168–169 (GT) is a binding site for (S)-2,3,4,5-tetrahydrodipicolinate.

This sequence belongs to the DapB family. As to quaternary structure, homotetramer.

It localises to the cytoplasm. It catalyses the reaction (S)-2,3,4,5-tetrahydrodipicolinate + NAD(+) + H2O = (2S,4S)-4-hydroxy-2,3,4,5-tetrahydrodipicolinate + NADH + H(+). It carries out the reaction (S)-2,3,4,5-tetrahydrodipicolinate + NADP(+) + H2O = (2S,4S)-4-hydroxy-2,3,4,5-tetrahydrodipicolinate + NADPH + H(+). The protein operates within amino-acid biosynthesis; L-lysine biosynthesis via DAP pathway; (S)-tetrahydrodipicolinate from L-aspartate: step 4/4. Functionally, catalyzes the conversion of 4-hydroxy-tetrahydrodipicolinate (HTPA) to tetrahydrodipicolinate. The polypeptide is 4-hydroxy-tetrahydrodipicolinate reductase (Buchnera aphidicola subsp. Acyrthosiphon pisum (strain Tuc7)).